Reading from the N-terminus, the 693-residue chain is Elongation factor G (693 aa).

Residues 8 to 282 (EKTRNIGIMA…AVIDYLPSPL (275 aa)) form the tr-type G domain. Residues 17–24 (AHVDAGKT), 81–85 (DTPGH), and 135–138 (NKMD) each bind GTP.

This sequence belongs to the TRAFAC class translation factor GTPase superfamily. Classic translation factor GTPase family. EF-G/EF-2 subfamily.

Its subcellular location is the cytoplasm. Catalyzes the GTP-dependent ribosomal translocation step during translation elongation. During this step, the ribosome changes from the pre-translocational (PRE) to the post-translocational (POST) state as the newly formed A-site-bound peptidyl-tRNA and P-site-bound deacylated tRNA move to the P and E sites, respectively. Catalyzes the coordinated movement of the two tRNA molecules, the mRNA and conformational changes in the ribosome. This Streptococcus pneumoniae (strain ATCC 700669 / Spain 23F-1) protein is Elongation factor G.